The following is a 1256-amino-acid chain: MYLYNLTLQRPTSVYQSISGNFSGTKQVEIVLNHGRSLELIRYDENGKMQSVLYTEVFGIVRSIIPFRLTSGTKDYIIVGSDSGRVVILEYNSQKNQFDKIHQETFGRSGCRRIVPGQYLAVDPKGRAFMIGAIEKQKLVYILNRDSSANLTISSPLEAHKSNTIVFSMCGVDVGFDNPIFATISVDYTEEDSSSGGGGGGSIEEMMDEDIGKKKKLLTYYELDLGLNNVVRKWSDQVDDSANIVMTVPGGTEGPGGVLVASEDYIVYRNQDHAEVRSRIPRRYGSDPNKGVLIISHSSHKQKGMFFFLVQSEHGDLYKITLDYQGDQVSEVNVNYFDTIVLANCLTVLKNGFLFAASEFGDHTLYFFKSIGDEEEEGQAKRLEDKDGHLWFTPRNSCGTKMEELKNLEPTSHLSSLSPIIDFKVLDLVREENPQLYSLCGTGLNSSLKVLRHGLSVTTITTANLPGVPSGIWTVPKSTSPNAIDQTDKYIVVSFVGTTSVLSVGDTIQENHESGILETTTTLLVKSMGDDAIIQVFPTGFRHIKSDLRINEWRAPGRKTIVRASANQSQLAIALSGGEIIYFELDQASNLIEIIKKDLRRDIACIEISPIPKGRNMARFIAVSDWEGPIRVLSLDRDNCLGQVSMLDTDKVYIESLSIIEMQLNEMGIETKKSQSQTGQTTTTTTSTSSASSSVTSGGSLFLFVGLKNGVVKRATLDSVTGELSDIRTRLLGRKPVKLFKVKVRGSNAMLALSSRVWLNYINQGKLDIVPLSIEPLENASNLSSEQSAESIVATSENKIIIFSIDKLGDLFNQETIKLNATPKRFIIHPQTSYIIILETETNYNTDNIDIDKINEQSEKLLLEKQKELQQEMDIDDDDQNNNNEIEPFKKLFKPKAGKGKWKSYIKIMDPITHESLESLMLEDGEAGFSVCTCSFGESGEIFLVVGCVTDMVLNPKSHKSAHLNLYRFIDGGKKLELLYKTEVEEPVYAMAQFQGKLVCGVGKSIRIYDMGKKKLLRKCETKNLPNTIVNIHSLGDRLVVGDIQESIHFIKYKRSENMLYVFADDLAPRWMTSSVMLDYDTVAGADKFGNIFVLRLPLLISDEVEEDPTGTKLKFESGTLNGAPHKLDHIANFFVGDTVTTLNKTSLVVGGPEVILYTTISGAIGALIPFTSREDVDFFSTLEMNMRSDCLPLCGRDHLAYRSYYFPVKNIIDGDLCEQFSTLNYQKQLSISEELSRSPSEVIKKLEEIRSQKLL.

The tract at residues 671–696 is disordered; the sequence is TKKSQSQTGQTTTTTTSTSSASSSVT. Residues 674–696 are compositionally biased toward low complexity; the sequence is SQSQTGQTTTTTTSTSSASSSVT.

The protein belongs to the RSE1 family. In terms of assembly, identified in the spliceosome A complex; remains associated with the spliceosome throughout the splicing process. Component of the spliceosome B complex. Identified in the spliceosome C complex. Identified in the spliceosome E complex. Component of the U11/U12 snRNPs that are part of the U12-type spliceosome. Component of splicing factor SF3B complex which is composed of at least eight subunits. SF3B associates with the splicing factor SF3A and a 12S RNA unit to form the U2 small nuclear ribonucleoproteins complex (U2 snRNP).

It is found in the nucleus. Functionally, involved in pre-mRNA splicing as a component of the splicing factor SF3B complex, a constituent of the spliceosome. SF3B complex is required for 'A' complex assembly formed by the stable binding of U2 snRNP to the branchpoint sequence (BPS) in pre-mRNA. Sequence independent binding of SF3A/SF3B complex upstream of the branch site is essential, it may anchor U2 snRNP to the pre-mRNA. May also be involved in the assembly of the 'E' complex. Also belongs to the minor U12-dependent spliceosome, which is involved in the splicing of rare class of nuclear pre-mRNA intron. The polypeptide is Probable splicing factor 3B subunit 3 (sf3b3) (Dictyostelium discoideum (Social amoeba)).